Reading from the N-terminus, the 97-residue chain is Putative pterin-4-alpha-carbinolamine dehydratase (97 aa).

The protein belongs to the pterin-4-alpha-carbinolamine dehydratase family.

The enzyme catalyses (4aS,6R)-4a-hydroxy-L-erythro-5,6,7,8-tetrahydrobiopterin = (6R)-L-erythro-6,7-dihydrobiopterin + H2O. The chain is Putative pterin-4-alpha-carbinolamine dehydratase from Saccharolobus solfataricus (strain ATCC 35092 / DSM 1617 / JCM 11322 / P2) (Sulfolobus solfataricus).